A 184-amino-acid polypeptide reads, in one-letter code: Phosphopantetheine adenylyltransferase (184 aa).

Residue S8 participates in substrate binding. ATP-binding positions include 8 to 9 (SF) and H16. The substrate site is built by K40, L74, and R88. ATP-binding positions include 89 to 91 (GLR), E99, and 123 to 129 (WSFVSST).

Belongs to the bacterial CoaD family. As to quaternary structure, homohexamer. Mg(2+) is required as a cofactor.

It localises to the cytoplasm. The catalysed reaction is (R)-4'-phosphopantetheine + ATP + H(+) = 3'-dephospho-CoA + diphosphate. It participates in cofactor biosynthesis; coenzyme A biosynthesis; CoA from (R)-pantothenate: step 4/5. Functionally, reversibly transfers an adenylyl group from ATP to 4'-phosphopantetheine, yielding dephospho-CoA (dPCoA) and pyrophosphate. The polypeptide is Phosphopantetheine adenylyltransferase (Deinococcus geothermalis (strain DSM 11300 / CIP 105573 / AG-3a)).